Here is a 317-residue protein sequence, read N- to C-terminus: L-lactate dehydrogenase (317 aa).

NAD(+)-binding positions include valine 17, aspartate 38, lysine 43, tyrosine 68, and 82-83 (GV). Arginine 91 lines the substrate pocket. NAD(+)-binding positions include serine 104, 121–123 (VSN), and serine 146. Position 123–126 (123–126 (NPVD)) interacts with substrate. Substrate is bound at residue 151 to 154 (DTSR). Beta-D-fructose 1,6-bisphosphate contacts are provided by lysine 156 and histidine 171. The active-site Proton acceptor is histidine 178. Tyrosine 224 carries the post-translational modification Phosphotyrosine. Substrate is bound at residue threonine 233.

Belongs to the LDH/MDH superfamily. LDH family. Homotetramer.

The protein resides in the cytoplasm. It carries out the reaction (S)-lactate + NAD(+) = pyruvate + NADH + H(+). Its pathway is fermentation; pyruvate fermentation to lactate; (S)-lactate from pyruvate: step 1/1. Allosterically activated by fructose 1,6-bisphosphate (FBP). Its function is as follows. Catalyzes the conversion of lactate to pyruvate. The protein is L-lactate dehydrogenase of Clostridium perfringens (strain ATCC 13124 / DSM 756 / JCM 1290 / NCIMB 6125 / NCTC 8237 / Type A).